Here is a 657-residue protein sequence, read N- to C-terminus: Forkhead box protein O3 (657 aa).

2 disordered regions span residues 1 to 71 and 216 to 320; these read MAEA…EGAA and SSWW…ELDD. The fork-head DNA-binding region spans 142-236; the sequence is WGNMSYADLI…KGGKAPRRRA (95 aa). Positions 246–257 are enriched in basic residues; that stretch reads TKSRGRAAKKKA. Polar residues predominate over residues 268–283; it reads DSPSQLSKWPGSPTSR. Residues 284–296 show a composition bias toward basic and acidic residues; it reads SSDKLDTWTDFRS. Positions 297–307 are enriched in polar residues; that stretch reads RTNSNASTISG.

Post-translationally, dephosphorylation may promote translocation to the nucleus where the protein induces transcription of target genes and triggers apoptosis. As to expression, localized to the animal hemisphere during early cleavage stages. At the late neurula, localized in the anterior neural plate, neural crest cells and in the hatching gland. As development progresses, expression becomes less localized, being observed in a variety of organs and tissues including the head, branchial arches and somites by stage 32.

It is found in the cytoplasm. Its subcellular location is the cytosol. The protein resides in the nucleus. In terms of biological role, transcriptional activator that recognizes and binds to the DNA sequence 5'-[AG]TAAA[TC]A-3' and regulates different processes, such as apoptosis and autophagy. Acts as a positive regulator of autophagy in skeletal muscle: in starved cells, enters the nucleus following dephosphorylation and binds the promoters of autophagy genes, thereby activating their expression, resulting in proteolysis of skeletal muscle proteins. Triggers apoptosis in the absence of survival factors, including neuronal cell death upon oxidative stress. In response to metabolic stress, translocates into the mitochondria where it promotes mtDNA transcription. Also acts as a key regulator of chondrogenic commitment of skeletal progenitor cells in response to lipid availability: when lipids levels are low, translocates to the nucleus and promotes expression of sox9, which induces chondrogenic commitment and suppresses fatty acid oxidation. Also acts as a key regulator of regulatory T-cells (Treg) differentiation. This is Forkhead box protein O3 from Xenopus laevis (African clawed frog).